We begin with the raw amino-acid sequence, 188 residues long: Phosphoribosylglycinamide formyltransferase (188 aa).

12-14 (GSN) is a N(1)-(5-phospho-beta-D-ribosyl)glycinamide binding site. Residues Lys-66, 91–94 (MRLI), and Asn-108 contribute to the (6R)-10-formyltetrahydrofolate site. His-110 functions as the Proton donor in the catalytic mechanism.

This sequence belongs to the GART family.

It carries out the reaction N(1)-(5-phospho-beta-D-ribosyl)glycinamide + (6R)-10-formyltetrahydrofolate = N(2)-formyl-N(1)-(5-phospho-beta-D-ribosyl)glycinamide + (6S)-5,6,7,8-tetrahydrofolate + H(+). It functions in the pathway purine metabolism; IMP biosynthesis via de novo pathway; N(2)-formyl-N(1)-(5-phospho-D-ribosyl)glycinamide from N(1)-(5-phospho-D-ribosyl)glycinamide (10-formyl THF route): step 1/1. Catalyzes the transfer of a formyl group from 10-formyltetrahydrofolate to 5-phospho-ribosyl-glycinamide (GAR), producing 5-phospho-ribosyl-N-formylglycinamide (FGAR) and tetrahydrofolate. The polypeptide is Phosphoribosylglycinamide formyltransferase (Staphylococcus aureus (strain COL)).